Here is a 141-residue protein sequence, read N- to C-terminus: Nucleoside diphosphate kinase (141 aa).

The ATP site is built by K11, F59, R87, T93, R104, and N114. H117 (pros-phosphohistidine intermediate) is an active-site residue.

The protein belongs to the NDK family. As to quaternary structure, homotetramer. It depends on Mg(2+) as a cofactor.

The protein localises to the cytoplasm. It catalyses the reaction a 2'-deoxyribonucleoside 5'-diphosphate + ATP = a 2'-deoxyribonucleoside 5'-triphosphate + ADP. The catalysed reaction is a ribonucleoside 5'-diphosphate + ATP = a ribonucleoside 5'-triphosphate + ADP. In terms of biological role, major role in the synthesis of nucleoside triphosphates other than ATP. The ATP gamma phosphate is transferred to the NDP beta phosphate via a ping-pong mechanism, using a phosphorylated active-site intermediate. The protein is Nucleoside diphosphate kinase of Histophilus somni (strain 129Pt) (Haemophilus somnus).